The following is a 318-amino-acid chain: NADH-ubiquinone oxidoreductase chain 1 (318 aa).

Helical transmembrane passes span 2-22 (FLTN…FLTL), 36-56 (GPNI…IKLF), 69-89 (LLFT…WIPL), 100-120 (LGML…LWSG), 130-152 (IGAL…ILLH), 171-191 (HIWL…STLA), 217-237 (AGPF…MNAL), 254-273 (LYST…FLWI), and 294-314 (LPLT…LTSI).

The protein belongs to the complex I subunit 1 family.

It localises to the mitochondrion inner membrane. The catalysed reaction is a ubiquinone + NADH + 5 H(+)(in) = a ubiquinol + NAD(+) + 4 H(+)(out). In terms of biological role, core subunit of the mitochondrial membrane respiratory chain NADH dehydrogenase (Complex I) that is believed to belong to the minimal assembly required for catalysis. Complex I functions in the transfer of electrons from NADH to the respiratory chain. The immediate electron acceptor for the enzyme is believed to be ubiquinone. This is NADH-ubiquinone oxidoreductase chain 1 (MT-ND1) from Cyclopes didactylus (Silky anteater).